The following is a 597-amino-acid chain: Putative Xaa-Pro dipeptidyl-peptidase (597 aa).

Catalysis depends on charge relay system residues S224, D336, and H367.

This sequence belongs to the peptidase S15 family.

It catalyses the reaction Hydrolyzes Xaa-Pro-|- bonds to release unblocked, N-terminal dipeptides from substrates including Ala-Pro-|-p-nitroanilide and (sequentially) Tyr-Pro-|-Phe-Pro-|-Gly-Pro-|-Ile.. The protein is Putative Xaa-Pro dipeptidyl-peptidase of Bacillus anthracis.